Here is a 159-residue protein sequence, read N- to C-terminus: MSMNRQEISDLCVKSLEGRMVGTEAQNIENGNAFYRYFFTNFPDLRVYFKGAEKYTADDVKKSERFDKQGQRILLACHLLANVYTNEEVFKGYVRETINRHRIYKMDPALWMAFFTVFTGYLESVGCLNDQQKAAWMALGKEFNAESQTHLKNSNLPHV.

A Globin domain is found at 1–152 (MSMNRQEISD…FNAESQTHLK (152 aa)). H101 lines the heme pocket.

It belongs to the globin family. As to quaternary structure, homodimer. In terms of tissue distribution, expressed mainly in a subset of neuronal cells and in head muscular tissue.

The protein resides in the cytoplasm. May be a globin and may play a role in oxygen transport. This chain is Globin-like protein (glb-1), found in Caenorhabditis elegans.